The chain runs to 122 residues: Large ribosomal subunit protein bL19c (122 aa).

The protein belongs to the bacterial ribosomal protein bL19 family.

It localises to the plastid. The protein localises to the chloroplast. In Gracilaria tenuistipitata var. liui (Red alga), this protein is Large ribosomal subunit protein bL19c.